The chain runs to 91 residues: Small ribosomal subunit protein bS16 (91 aa).

Belongs to the bacterial ribosomal protein bS16 family.

This Phytoplasma australiense protein is Small ribosomal subunit protein bS16.